Reading from the N-terminus, the 367-residue chain is S-adenosylmethionine:tRNA ribosyltransferase-isomerase (367 aa).

This sequence belongs to the QueA family. As to quaternary structure, monomer.

The protein resides in the cytoplasm. The catalysed reaction is 7-aminomethyl-7-carbaguanosine(34) in tRNA + S-adenosyl-L-methionine = epoxyqueuosine(34) in tRNA + adenine + L-methionine + 2 H(+). It functions in the pathway tRNA modification; tRNA-queuosine biosynthesis. Its function is as follows. Transfers and isomerizes the ribose moiety from AdoMet to the 7-aminomethyl group of 7-deazaguanine (preQ1-tRNA) to give epoxyqueuosine (oQ-tRNA). The sequence is that of S-adenosylmethionine:tRNA ribosyltransferase-isomerase from Beijerinckia indica subsp. indica (strain ATCC 9039 / DSM 1715 / NCIMB 8712).